The chain runs to 239 residues: tRNA (guanine-N(7)-)-methyltransferase (239 aa).

4 residues coordinate S-adenosyl-L-methionine: Glu-69, Glu-94, Asp-121, and Asp-144. Asp-144 is a catalytic residue. Lys-148 lines the substrate pocket. The interaction with RNA stretch occupies residues 150–155 (RHNKRR). Substrate-binding positions include Asp-180 and 217–220 (TKFE).

Belongs to the class I-like SAM-binding methyltransferase superfamily. TrmB family. Monomer.

The catalysed reaction is guanosine(46) in tRNA + S-adenosyl-L-methionine = N(7)-methylguanosine(46) in tRNA + S-adenosyl-L-homocysteine. It participates in tRNA modification; N(7)-methylguanine-tRNA biosynthesis. In terms of biological role, catalyzes the formation of N(7)-methylguanine at position 46 (m7G46) in tRNA. The polypeptide is tRNA (guanine-N(7)-)-methyltransferase (Yersinia pestis (strain Pestoides F)).